Here is a 245-residue protein sequence, read N- to C-terminus: 1-(5-phosphoribosyl)-5-[(5-phosphoribosylamino)methylideneamino] imidazole-4-carboxamide isomerase (245 aa).

Asp8 acts as the Proton acceptor in catalysis. The Proton donor role is filled by Asp130.

This sequence belongs to the HisA/HisF family.

Its subcellular location is the cytoplasm. It catalyses the reaction 1-(5-phospho-beta-D-ribosyl)-5-[(5-phospho-beta-D-ribosylamino)methylideneamino]imidazole-4-carboxamide = 5-[(5-phospho-1-deoxy-D-ribulos-1-ylimino)methylamino]-1-(5-phospho-beta-D-ribosyl)imidazole-4-carboxamide. It functions in the pathway amino-acid biosynthesis; L-histidine biosynthesis; L-histidine from 5-phospho-alpha-D-ribose 1-diphosphate: step 4/9. This is 1-(5-phosphoribosyl)-5-[(5-phosphoribosylamino)methylideneamino] imidazole-4-carboxamide isomerase from Pseudomonas putida (strain ATCC 700007 / DSM 6899 / JCM 31910 / BCRC 17059 / LMG 24140 / F1).